A 163-amino-acid polypeptide reads, in one-letter code: UPF0478 protein SAB1599c (163 aa).

The helical transmembrane segment at Ile7–Leu27 threads the bilayer.

Belongs to the UPF0478 family.

The protein localises to the cell membrane. The polypeptide is UPF0478 protein SAB1599c (Staphylococcus aureus (strain bovine RF122 / ET3-1)).